A 314-amino-acid chain; its full sequence is Atrochrysone carboxyl ACP thioesterase AgnL7 (314 aa).

Zn(2+) contacts are provided by His-103, His-105, Asp-107, and His-108. The active-site Proton donor/acceptor is the Asp-107.

Belongs to the metallo-beta-lactamase superfamily. Requires Zn(2+) as cofactor.

It catalyses the reaction atrochrysone carboxyl-[ACP] + H2O = atrochrysone carboxylate + holo-[ACP] + H(+). Its pathway is secondary metabolite biosynthesis. Functionally, atrochrysone carboxyl ACP thioesterase; part of the gene cluster that mediates the biosynthesis of agnestins, dihydroxy-xanthone metabolites. The pathway begins with the assembly and cyclization of atrochrysone thioester by the non-reducing polyketide synthase Agnpks1. The atrochrysone carboxyl ACP thioesterase AgnL7 then breaks the thioester bond and releases the atrochrysone carboxylic acid as the first enzyme-free intermediate. The decarboxylase AgnL1 then catalyzes the concerted decarboxylation-elimination required to convert atochrysone carboxylic acid into emodin anthrone, which is further oxidized to emodin by the anthrone oxygenase AgnL2. Emodin then undergoes reduction catalyzed by the oxidoreductase AgnL4 to yield the dihydroquinone tautomer which is the substrate for reduction by the short chain dehydrogenase AgnL6 reduction to produce hydroxyketone, followed by AgnL8 dehydration and likely spontaneous autoxidation to chrysophanol. Baeyer-Villiger oxidation by the oxidase AgnL3 leads to monodictyphenone via cleavage of the C-10/C-10a bond of chrysophanol. Alternative cleavage at the C-4a/C-10 bond of chrysophanol also leads to the formation some cephalone F. Further conversion to agnestins A and B, requires reduction to dihydro-monodictyphenone, oxidation to agnestin C probably via an epoxide, and rearrangement to either agnestin A or agnestin B directly, although agnestin A or agnestin B can also interconvert. Within the cluster, AgnR1 is the only unassigned oxidoreductase present which could be involved in this conversion. However, AgnR1 seems not to be involved in this step, and thus genes involved in the proposed oxidation/reduction may be located elsewhere on the genome. Further agnestin A derivatives are probably formed by spontaneous decarboxylations, dehydrations and methanolysis reactions. The polypeptide is Atrochrysone carboxyl ACP thioesterase AgnL7 (Paecilomyces divaricatus (Penicillium divaricatum)).